Consider the following 463-residue polypeptide: L-seryl-tRNA(Sec) selenium transferase (463 aa).

Position 295 is an N6-(pyridoxal phosphate)lysine (K295).

This sequence belongs to the SelA family. Homodecamer; pentamer of dimers. Binds only one seryl-tRNA(Sec) per dimer. Requires pyridoxal 5'-phosphate as cofactor.

It localises to the cytoplasm. It carries out the reaction L-seryl-tRNA(Sec) + selenophosphate + H(+) = L-selenocysteinyl-tRNA(Sec) + phosphate. It participates in aminoacyl-tRNA biosynthesis; selenocysteinyl-tRNA(Sec) biosynthesis; selenocysteinyl-tRNA(Sec) from L-seryl-tRNA(Sec) (bacterial route): step 1/1. Functionally, converts seryl-tRNA(Sec) to selenocysteinyl-tRNA(Sec) required for selenoprotein biosynthesis. The polypeptide is L-seryl-tRNA(Sec) selenium transferase (Escherichia coli O17:K52:H18 (strain UMN026 / ExPEC)).